The primary structure comprises 152 residues: Aspartate 1-decarboxylase (152 aa).

Catalysis depends on serine 24, which acts as the Schiff-base intermediate with substrate; via pyruvic acid. A Pyruvic acid (Ser) modification is found at serine 24. Threonine 56 contacts substrate. Tyrosine 57 functions as the Proton donor in the catalytic mechanism. Position 72–74 (72–74) interacts with substrate; it reads GAA.

This sequence belongs to the PanD family. As to quaternary structure, heterooctamer of four alpha and four beta subunits. Requires pyruvate as cofactor. Post-translationally, is synthesized initially as an inactive proenzyme, which is activated by self-cleavage at a specific serine bond to produce a beta-subunit with a hydroxyl group at its C-terminus and an alpha-subunit with a pyruvoyl group at its N-terminus.

The protein localises to the cytoplasm. The catalysed reaction is L-aspartate + H(+) = beta-alanine + CO2. The protein operates within cofactor biosynthesis; (R)-pantothenate biosynthesis; beta-alanine from L-aspartate: step 1/1. Functionally, catalyzes the pyruvoyl-dependent decarboxylation of aspartate to produce beta-alanine. This chain is Aspartate 1-decarboxylase, found in Methylobacterium nodulans (strain LMG 21967 / CNCM I-2342 / ORS 2060).